The following is a 478-amino-acid chain: Mannose-1-phosphate guanylyltransferase (478 aa).

It belongs to the mannose-6-phosphate isomerase type 2 family.

The enzyme catalyses alpha-D-mannose 1-phosphate + GTP + H(+) = GDP-alpha-D-mannose + diphosphate. The protein operates within nucleotide-sugar biosynthesis; GDP-alpha-D-mannose biosynthesis; GDP-alpha-D-mannose from alpha-D-mannose 1-phosphate (GTP route): step 1/1. In terms of biological role, involved in the biosynthesis of the capsular polysaccharide colanic acid. This Escherichia coli (strain K12) protein is Mannose-1-phosphate guanylyltransferase (manC).